The following is a 139-amino-acid chain: NADPH-dependent 7-cyano-7-deazaguanine reductase (139 aa).

Cysteine 34 (thioimide intermediate) is an active-site residue. Aspartate 41 (proton donor) is an active-site residue. Substrate-binding positions include 56-58 and 75-76; these read VEL and HE.

This sequence belongs to the GTP cyclohydrolase I family. QueF type 1 subfamily.

The protein resides in the cytoplasm. The catalysed reaction is 7-aminomethyl-7-carbaguanine + 2 NADP(+) = 7-cyano-7-deazaguanine + 2 NADPH + 3 H(+). The protein operates within tRNA modification; tRNA-queuosine biosynthesis. Catalyzes the NADPH-dependent reduction of 7-cyano-7-deazaguanine (preQ0) to 7-aminomethyl-7-deazaguanine (preQ1). The chain is NADPH-dependent 7-cyano-7-deazaguanine reductase from Thiobacillus denitrificans (strain ATCC 25259 / T1).